The chain runs to 166 residues: Disulfide bond reductase DsbH (166 aa).

Positions 1–22 (MKFWLQGCAFVGCLLLTLPCCA) are cleaved as a signal peptide. Positions 32–166 (LQQTRPIAAA…SKVKSALKLR (135 aa)) constitute a Thioredoxin domain. A disulfide bridge links Cys72 with Cys75. Position 73–74 (73–74 (MW)) interacts with substrate.

Monomer.

Its subcellular location is the periplasm. Functionally, catalyzes the reduction of disulfide bonds. May function in reducing intermolecular disulfides between proteins and small molecules in the periplasm, or keeping a specific subset of periplasmic proteins reduced, or maintaining the periplasm of Chlamydia in a generally reducing state. Seems to be unable to oxidize thiols into disulfides and does not display disulfide bond isomerase activity. In Chlamydia pneumoniae (Chlamydophila pneumoniae), this protein is Disulfide bond reductase DsbH (dsbH).